Consider the following 440-residue polypeptide: UDP-N-acetylmuramoylalanine--D-glutamate ligase (440 aa).

112-118 is an ATP binding site; sequence GSNGKST.

It belongs to the MurCDEF family.

It is found in the cytoplasm. The enzyme catalyses UDP-N-acetyl-alpha-D-muramoyl-L-alanine + D-glutamate + ATP = UDP-N-acetyl-alpha-D-muramoyl-L-alanyl-D-glutamate + ADP + phosphate + H(+). The protein operates within cell wall biogenesis; peptidoglycan biosynthesis. Functionally, cell wall formation. Catalyzes the addition of glutamate to the nucleotide precursor UDP-N-acetylmuramoyl-L-alanine (UMA). The chain is UDP-N-acetylmuramoylalanine--D-glutamate ligase from Blochmanniella pennsylvanica (strain BPEN).